We begin with the raw amino-acid sequence, 189 residues long: Ribonuclease HII (189 aa).

The 189-residue stretch at Met1–Cys189 folds into the RNase H type-2 domain. Positions 6, 7, and 98 each coordinate a divalent metal cation.

Belongs to the RNase HII family. Mn(2+) is required as a cofactor. It depends on Mg(2+) as a cofactor.

The protein localises to the cytoplasm. The enzyme catalyses Endonucleolytic cleavage to 5'-phosphomonoester.. Its function is as follows. Endonuclease that specifically degrades the RNA of RNA-DNA hybrids. This is Ribonuclease HII from Acinetobacter baylyi (strain ATCC 33305 / BD413 / ADP1).